The following is a 502-amino-acid chain: Nondiscriminating glutamyl-tRNA synthetase EARS2, mitochondrial (502 aa).

The transit peptide at 1 to 20 (MAGMLREVCGAAASGLRVRF) directs the protein to the mitochondrion. Residue 19-21 (RFG) participates in L-glutamate binding. Positions 24–32 (PTGFLHLGG) match the 'HIGH' region motif. His29 provides a ligand contact to ATP. L-glutamate is bound by residues Glu55, 207 to 211 (YHLAN), and Arg225. Residues Glu228 and 263 to 267 (KLSKR) contribute to the ATP site. The short motif at 263 to 267 (KLSKR) is the 'KMSKS' region element.

The protein belongs to the class-I aminoacyl-tRNA synthetase family. Glutamate--tRNA ligase type 1 subfamily.

The protein localises to the mitochondrion matrix. The catalysed reaction is tRNA(Glx) + L-glutamate + ATP = L-glutamyl-tRNA(Glx) + AMP + diphosphate. The enzyme catalyses tRNA(Glu) + L-glutamate + ATP = L-glutamyl-tRNA(Glu) + AMP + diphosphate. It catalyses the reaction tRNA(Gln) + L-glutamate + ATP = L-glutamyl-tRNA(Gln) + AMP + diphosphate. Functionally, non-discriminating glutamyl-tRNA synthetase that catalyzes aminoacylation of both mitochondrial tRNA(Glu) and tRNA(Gln) and participates in RNA aminoacylation for mitochondrial protein translation. Attachs glutamate to tRNA(Glu) or tRNA(Gln) in a two-step reaction: glutamate is first activated by ATP to form Glu-AMP and then transferred to the acceptor end of tRNA(Glu) or tRNA(Gln). The sequence is that of Nondiscriminating glutamyl-tRNA synthetase EARS2, mitochondrial from Gallus gallus (Chicken).